Reading from the N-terminus, the 266-residue chain is Type II iodothyronine deiodinase (266 aa).

Residues 1 to 9 (MGLLSVDLL) lie on the Lumenal side of the membrane. The helical; Signal-anchor for type III membrane protein transmembrane segment at 10–34 (ITLQILPVFFSNCLFLALYDSVILL) threads the bilayer. The Cytoplasmic portion of the chain corresponds to 35–266 (KHVALLLSRS…KNFSKRUILD (232 aa)). Sec-130 is an active-site residue. Non-standard amino acids (selenocysteine) are located at Sec-130 and Sec-263.

Belongs to the iodothyronine deiodinase family. In terms of assembly, predominantly monomer. Can form homodimers but homodimerization is not essential for enzyme activity. Interacts with USP20 and USP33. Interacts with MARCHF6. In terms of processing, ubiquitinated by MARCHF6, leading to its degradation by the proteasome. Deubiquitinated by USP20 and USP33. As to expression, expressed in cerebral cortex, cerebellum, pituitary gland, mostly in anterior pituitary gland, and pineal gland, as well as in brown adipose tissue (BAT).

Its subcellular location is the endoplasmic reticulum membrane. It catalyses the reaction 3,3',5-triiodo-L-thyronine + iodide + A + H(+) = L-thyroxine + AH2. The enzyme catalyses 3,3'-diiodo-L-thyronine + iodide + A + H(+) = 3,3',5'-triiodo-L-thyronine + AH2. It carries out the reaction 3'-iodo-L-thyronine + iodide + A + H(+) = 3',5'-diiodo-L-thyronine + AH2. The catalysed reaction is 3,3'-diiodothyronamine + iodide + A + H(+) = 3,3',5'-triiodothyronamine + AH2. It catalyses the reaction 3'-iodothyronamine + iodide + A + H(+) = 3',5'-diiodothyronamine + AH2. In terms of biological role, plays a crucial role in the metabolism of thyroid hormones (TH) and has specific roles in TH activation and inactivation by deiodination. Catalyzes the deiodination of L-thyroxine (T4) to 3,5,3'-triiodothyronine (T3) and 3',5'-diiodothyronine (3',5'-T2) to 3'-monoiodothyronine (3'-T1) via outer-ring deiodination (ORD). Catalyzes the deiodination of 3,3',5'-triiodothyronine (rT3) to 3,3'-diiodothyronine (3,3'-T2) via ORD. Catalyzes the phenolic ring deiodinations of 3,3',5'-triiodothyronamine and 3',5'- diiodothyronamine. This Rattus norvegicus (Rat) protein is Type II iodothyronine deiodinase (Dio2).